The sequence spans 237 residues: 2-C-methyl-D-erythritol 4-phosphate cytidylyltransferase (237 aa).

It belongs to the IspD/TarI cytidylyltransferase family. IspD subfamily. Homodimer.

It carries out the reaction 2-C-methyl-D-erythritol 4-phosphate + CTP + H(+) = 4-CDP-2-C-methyl-D-erythritol + diphosphate. Its pathway is isoprenoid biosynthesis; isopentenyl diphosphate biosynthesis via DXP pathway; isopentenyl diphosphate from 1-deoxy-D-xylulose 5-phosphate: step 2/6. Catalyzes the formation of 4-diphosphocytidyl-2-C-methyl-D-erythritol from CTP and 2-C-methyl-D-erythritol 4-phosphate (MEP). In Pectobacterium atrosepticum (strain SCRI 1043 / ATCC BAA-672) (Erwinia carotovora subsp. atroseptica), this protein is 2-C-methyl-D-erythritol 4-phosphate cytidylyltransferase.